The primary structure comprises 248 residues: Segregation and condensation protein A (248 aa).

This sequence belongs to the ScpA family. In terms of assembly, component of a cohesin-like complex composed of ScpA, ScpB and the Smc homodimer, in which ScpA and ScpB bind to the head domain of Smc. The presence of the three proteins is required for the association of the complex with DNA.

The protein localises to the cytoplasm. In terms of biological role, participates in chromosomal partition during cell division. May act via the formation of a condensin-like complex containing Smc and ScpB that pull DNA away from mid-cell into both cell halves. The protein is Segregation and condensation protein A of Bacillus cytotoxicus (strain DSM 22905 / CIP 110041 / 391-98 / NVH 391-98).